Reading from the N-terminus, the 924-residue chain is Protein translocase subunit SecA (924 aa).

ATP-binding positions include Gln87, Gly105–Thr109, and Asp517. Residues Val886–Glu906 are disordered. Zn(2+)-binding residues include Cys908, Cys910, Cys919, and His920.

It belongs to the SecA family. In terms of assembly, monomer and homodimer. Part of the essential Sec protein translocation apparatus which comprises SecA, SecYEG and auxiliary proteins SecDF-YajC and YidC. It depends on Zn(2+) as a cofactor.

It is found in the cell inner membrane. The protein resides in the cytoplasm. The catalysed reaction is ATP + H2O + cellular proteinSide 1 = ADP + phosphate + cellular proteinSide 2.. Its function is as follows. Part of the Sec protein translocase complex. Interacts with the SecYEG preprotein conducting channel. Has a central role in coupling the hydrolysis of ATP to the transfer of proteins into and across the cell membrane, serving both as a receptor for the preprotein-SecB complex and as an ATP-driven molecular motor driving the stepwise translocation of polypeptide chains across the membrane. The chain is Protein translocase subunit SecA from Azorhizobium caulinodans (strain ATCC 43989 / DSM 5975 / JCM 20966 / LMG 6465 / NBRC 14845 / NCIMB 13405 / ORS 571).